The sequence spans 175 residues: Dof zinc finger protein DOF1.5 (175 aa).

The disordered stretch occupies residues 29–57 (EEQQQQQQPELQATTAVRSPSSDLTAEKR). Positions 37-52 (PELQATTAVRSPSSDL) are enriched in polar residues. The Dof-type zinc finger occupies 62–116 (IPCPRCKSMETKFCYFNNYNVNQPRHFCKGCQRYWTAGGALRNVPVGAGRRKSKP). Cys-64, Cys-67, Cys-89, and Cys-92 together coordinate Zn(2+). The Nuclear localization signal signature appears at 162-168 (PVKRLRC).

Its subcellular location is the nucleus. Transcription factor that binds specifically to a 5'-AA[AG]G-3' consensus core sequence. Acts as a negative regulator in the phytochrome-mediated light responses. Controls phyB-mediated end-of-day response and the phyA-mediated anthocyanin accumulation. Not involved in direct flowering time regulation. This chain is Dof zinc finger protein DOF1.5 (DOF1.5), found in Arabidopsis thaliana (Mouse-ear cress).